The primary structure comprises 321 residues: uncharacterized protein (321 aa).

The Proton donor role is filled by Tyr49. His106 provides a ligand contact to substrate.

This sequence belongs to the aldo/keto reductase family.

This is an uncharacterized protein from Caenorhabditis elegans.